We begin with the raw amino-acid sequence, 334 residues long: Ornithine carbamoyltransferase (334 aa).

Residues 57–60, glutamine 84, arginine 108, and 135–138 each bind carbamoyl phosphate; these read STRT and HPTQ. L-ornithine contacts are provided by residues asparagine 169, aspartate 233, and 237–238; that span reads SM. Carbamoyl phosphate contacts are provided by residues 275-276 and arginine 320; that span reads CL.

Belongs to the aspartate/ornithine carbamoyltransferase superfamily. OTCase family.

The protein localises to the cytoplasm. It carries out the reaction carbamoyl phosphate + L-ornithine = L-citrulline + phosphate + H(+). Its pathway is amino-acid biosynthesis; L-arginine biosynthesis; L-arginine from L-ornithine and carbamoyl phosphate: step 1/3. Functionally, reversibly catalyzes the transfer of the carbamoyl group from carbamoyl phosphate (CP) to the N(epsilon) atom of ornithine (ORN) to produce L-citrulline. The sequence is that of Ornithine carbamoyltransferase from Vibrio cholerae serotype O1 (strain ATCC 39315 / El Tor Inaba N16961).